Consider the following 221-residue polypeptide: Woronin body major protein (221 aa).

The Microbody targeting signal signature appears at 219-221 (SRL).

This sequence belongs to the eIF-5A family. Hex1 subfamily. Forms oligomers. Self-assembles into hexagonal rods.

It is found in the cell septum. In terms of biological role, major component of Woronin bodies, fungal-specific organelles that occlude septal pores in order to separate intact from damaged compartments. Hex1 binds directly or indirectly to the Woronin body tether that in turn is anchored at the rim of the septal pore. The chain is Woronin body major protein from Emericella nidulans (strain FGSC A4 / ATCC 38163 / CBS 112.46 / NRRL 194 / M139) (Aspergillus nidulans).